The primary structure comprises 504 residues: Protoporphyrinogen oxidase, mitochondrial (504 aa).

Residues 20–25 (GAGVSG), 43–44 (EA), Lys-51, and 65–68 (GANT) each bind FAD. The segment at 213–232 (SPKNEKKQGPPKTSANKKRQ) is disordered. Residues Val-264 and 473–475 (LSV) each bind FAD.

The protein belongs to the protoporphyrinogen/coproporphyrinogen oxidase family. Protoporphyrinogen oxidase subfamily. FAD is required as a cofactor.

The protein localises to the mitochondrion. It carries out the reaction protoporphyrinogen IX + 3 O2 = protoporphyrin IX + 3 H2O2. The protein operates within porphyrin-containing compound metabolism; protoporphyrin-IX biosynthesis; protoporphyrin-IX from protoporphyrinogen-IX: step 1/1. With respect to regulation, inhibited by the herbicide acifluorfen. In terms of biological role, catalyzes the 6-electron oxidation of protoporphyrinogen-IX to form protoporphyrin-IX. Its function is as follows. Provides precursor for the mitochondrial and plastidic heme synthesis and the predominant chlorophyll synthesis in plastids. The protein is Protoporphyrinogen oxidase, mitochondrial (PPXII) of Nicotiana tabacum (Common tobacco).